The following is a 214-amino-acid chain: Charged multivesicular body protein 2b (214 aa).

The stretch at 25-55 (QRQIARDRTALEKQEKQLEMEIKKMAKTGNR) forms a coiled coil. Residues 178-199 (MAHAPSAARKTPSAATAKADGI) are disordered. An MIT-interacting motif motif is present at residues 202 to 212 (EDIERQLKALG).

Belongs to the SNF7 family. As to quaternary structure, probable core component of the endosomal sorting required for transport complex III (ESCRT-III). ESCRT-III components are thought to multimerize to form a flat lattice on the perimeter membrane of the endosome.

Its subcellular location is the cytoplasm. The protein localises to the cytosol. The protein resides in the late endosome membrane. Functionally, probable core component of the endosomal sorting required for transport complex III (ESCRT-III) which is involved in multivesicular bodies (MVBs) formation and sorting of endosomal cargo proteins into MVBs. MVBs contain intraluminal vesicles (ILVs) that are generated by invagination and scission from the limiting membrane of the endosome and mostly are delivered to lysosomes enabling degradation of membrane proteins, such as stimulated growth factor receptors, lysosomal enzymes and lipids. This Danio rerio (Zebrafish) protein is Charged multivesicular body protein 2b (chmp2b).